Reading from the N-terminus, the 407-residue chain is Betaine--homocysteine S-methyltransferase 1 (407 aa).

Residues 11-314 (KGILERLNSG…YHIRAIAEEL (304 aa)) form the Hcy-binding domain. K40, K93, and K98 each carry N6-succinyllysine. A Zn(2+)-binding site is contributed by C217. K232 and K241 each carry N6-succinyllysine. Zn(2+) contacts are provided by C299 and C300. The residue at position 330 (S330) is a Phosphoserine. An N6-succinyllysine mark is found at K340 and K377.

As to quaternary structure, homotetramer. Requires Zn(2+) as cofactor.

It is found in the cytoplasm. The protein localises to the cytosol. It localises to the nucleus. It carries out the reaction L-homocysteine + glycine betaine = N,N-dimethylglycine + L-methionine. The protein operates within amine and polyamine degradation; betaine degradation; sarcosine from betaine: step 1/2. It functions in the pathway amino-acid biosynthesis; L-methionine biosynthesis via de novo pathway; L-methionine from L-homocysteine (BhmT route): step 1/1. In terms of biological role, involved in the regulation of homocysteine metabolism. Converts betaine and homocysteine to dimethylglycine and methionine, respectively. This reaction is also required for the irreversible oxidation of choline. The protein is Betaine--homocysteine S-methyltransferase 1 (BHMT) of Bos taurus (Bovine).